The chain runs to 747 residues: Kinesin-like protein KIF3B (747 aa).

At methionine 1 the chain carries N-acetylmethionine. Serine 2 is subject to N-acetylserine; in Kinesin-like protein KIF3B, N-terminally processed. Residues 9–340 (SVRVVVRCRP…LRYANRAKNI (332 aa)) form the Kinesin motor domain. 96 to 103 (GQTGTGKT) contacts ATP. Residues 346-579 (VNEDPKDALL…EQTQNELTRE (234 aa)) are a coiled coil. Disordered stretches follow at residues 374–412 (IGRR…DKDD) and 698–747 (IQVD…LVPK). Over residues 393 to 411 (GEEEEEEGEEGEEDGDDKD) the composition is skewed to acidic residues. The globular stretch occupies residues 580–747 (LKLKHLIIEN…YPQSRGLVPK (168 aa)). Residues 701-710 (DASSFESTAS) are compositionally biased toward polar residues. The span at 711 to 721 (RKPKARPKSGR) shows a compositional bias: basic residues. The segment covering 722 to 735 (KSGSSSSSSGNPAS) has biased composition (low complexity).

It belongs to the TRAFAC class myosin-kinesin ATPase superfamily. Kinesin family. Kinesin II subfamily. Heterodimer of KIF3A and KIF3B. KIF3A/KIF3B heterodimer interacts with KIFAP3 forming a heterotrimeric (KIF3A/KIF3B/KIFAP3) complex. Interacts with the SMC3 subunit of the cohesin complex. Interacts directly with IFT20. Interacts with FLCN.

Its subcellular location is the cytoplasm. The protein localises to the cytoskeleton. The protein resides in the cell projection. It is found in the cilium. It localises to the dendritic spine. Its function is as follows. Microtubule-based molecular motor that transport intracellular cargos, such as vesicles, organelles and protein complexes. Uses ATP hydrolysis to generate force to bind and move along the microtubule. Plays a role in cilia formation. Involved in photoreceptor integrity and opsin trafficking in rod photoreceptors. Transports vesicles containing N-methyl-D-aspartate (NMDA) receptor subunit GRIN2A into neuronal dendrites. This chain is Kinesin-like protein KIF3B, found in Mus musculus (Mouse).